Consider the following 359-residue polypeptide: 3-dehydroquinate synthase (359 aa).

Residues 71–76 (DGEAYK), 105–109 (GVIGD), 129–130 (TT), K142, and K151 contribute to the NAD(+) site. Zn(2+) contacts are provided by E184, H247, and H264.

The protein belongs to the sugar phosphate cyclases superfamily. Dehydroquinate synthase family. It depends on Co(2+) as a cofactor. Zn(2+) is required as a cofactor. Requires NAD(+) as cofactor.

The protein localises to the cytoplasm. The catalysed reaction is 7-phospho-2-dehydro-3-deoxy-D-arabino-heptonate = 3-dehydroquinate + phosphate. It participates in metabolic intermediate biosynthesis; chorismate biosynthesis; chorismate from D-erythrose 4-phosphate and phosphoenolpyruvate: step 2/7. In terms of biological role, catalyzes the conversion of 3-deoxy-D-arabino-heptulosonate 7-phosphate (DAHP) to dehydroquinate (DHQ). The sequence is that of 3-dehydroquinate synthase from Burkholderia multivorans (strain ATCC 17616 / 249).